A 186-amino-acid chain; its full sequence is Small ribosomal subunit protein uS4 (186 aa).

In terms of domain architecture, S4 RNA-binding spans 106 to 170; that stretch reads RRLQTIVYRK…SPLKDEDHPI (65 aa). The tract at residues 151 to 186 is disordered; sequence EEEEVDYSPYSPLKDEDHPIRCEARGESPEETAAEE. Residues 163-178 are compositionally biased toward basic and acidic residues; that stretch reads LKDEDHPIRCEARGES.

It belongs to the universal ribosomal protein uS4 family. Part of the 30S ribosomal subunit. Contacts protein S5. The interaction surface between S4 and S5 is involved in control of translational fidelity.

Functionally, one of the primary rRNA binding proteins, it binds directly to 16S rRNA where it nucleates assembly of the body of the 30S subunit. Its function is as follows. With S5 and S12 plays an important role in translational accuracy. In Methanopyrus kandleri (strain AV19 / DSM 6324 / JCM 9639 / NBRC 100938), this protein is Small ribosomal subunit protein uS4.